Here is a 510-residue protein sequence, read N- to C-terminus: Amidophosphoribosyltransferase (510 aa).

The Nucleophile role is filled by Cys2. The Glutamine amidotransferase type-2 domain maps to 2–239 (CGILGIVLAN…PGEAVIIPKN (238 aa)). 2 residues coordinate Mg(2+): Asp373 and Asp374.

In the C-terminal section; belongs to the purine/pyrimidine phosphoribosyltransferase family. Mg(2+) is required as a cofactor.

It carries out the reaction 5-phospho-beta-D-ribosylamine + L-glutamate + diphosphate = 5-phospho-alpha-D-ribose 1-diphosphate + L-glutamine + H2O. Its pathway is purine metabolism; IMP biosynthesis via de novo pathway; N(1)-(5-phospho-D-ribosyl)glycinamide from 5-phospho-alpha-D-ribose 1-diphosphate: step 1/2. In Saccharomyces cerevisiae (strain ATCC 204508 / S288c) (Baker's yeast), this protein is Amidophosphoribosyltransferase (ADE4).